Here is a 66-residue protein sequence, read N- to C-terminus: Large ribosomal subunit protein bL33c (66 aa).

The protein belongs to the bacterial ribosomal protein bL33 family.

It is found in the plastid. The protein localises to the chloroplast. The chain is Large ribosomal subunit protein bL33c from Brachypodium distachyon (Purple false brome).